The chain runs to 207 residues: Large ribosomal subunit protein uL3 (207 aa).

The protein belongs to the universal ribosomal protein uL3 family. Part of the 50S ribosomal subunit. Forms a cluster with proteins L14 and L19.

Its function is as follows. One of the primary rRNA binding proteins, it binds directly near the 3'-end of the 23S rRNA, where it nucleates assembly of the 50S subunit. This Desulforapulum autotrophicum (strain ATCC 43914 / DSM 3382 / VKM B-1955 / HRM2) (Desulfobacterium autotrophicum) protein is Large ribosomal subunit protein uL3.